A 110-amino-acid chain; its full sequence is Endoribonuclease SymE (110 aa).

The SpoVT-AbrB domain maps to 29-74; it reads SRYPDYTRIPALTMKGQWLEAAGFATGTEVDVRVMNGCIVLTAQQP.

The protein belongs to the SymE family.

The protein resides in the cytoplasm. Its function is as follows. Involved in the degradation and recycling of damaged RNA. It is itself a target for degradation by the ATP-dependent protease Lon. This chain is Endoribonuclease SymE, found in Salmonella typhi.